The chain runs to 137 residues: Lysozyme (137 aa).

An N-terminal signal peptide occupies residues 1-20 (MSAVLVLALVLLSLTCVTDA). Residues 21–134 (ISDACLTCIC…WNAVKNQGCS (114 aa)) form the I-type lysozyme domain. 6 disulfides stabilise this stretch: C25–C102, C30–C37, C42–C51, C64–C84, C74–C80, and C98–C116. The Proton donor role is filled by E33. Catalysis depends on D45, which acts as the Nucleophile. Substrate is bound at residue 57–63 (KKSYWID). Substrate contacts are provided by residues Y88 and 109–111 (HNG).

Belongs to the glycosyl hydrolase 22 family. Type-I lysozyme subfamily.

Its subcellular location is the secreted. The catalysed reaction is Hydrolysis of (1-&gt;4)-beta-linkages between N-acetylmuramic acid and N-acetyl-D-glucosamine residues in a peptidoglycan and between N-acetyl-D-glucosamine residues in chitodextrins.. Has bacteriolytic activity. May play a role in digestion and in the host defense mechanisms against invading microbes. In Ostrea edulis (Native oyster), this protein is Lysozyme (lysoz).